The chain runs to 473 residues: Photosystem II CP43 reaction center protein (473 aa).

A propeptide spanning residues 1–14 (MKTLYSLRRFYPVE) is cleaved from the precursor. Threonine 15 bears the N-acetylthreonine mark. At threonine 15 the chain carries Phosphothreonine. The next 5 membrane-spanning stretches (helical) occupy residues 69 to 93 (LFEV…PHLA), 134 to 155 (LLGP…KDRN), 178 to 200 (KALY…RKIT), 255 to 275 (KPFA…LSYS), and 291 to 312 (WFNN…ASQA). Glutamate 367 provides a ligand contact to [CaMn4O5] cluster. The helical transmembrane segment at 447 to 471 (RARAAAAGFEKGIDRDFEPVLSMTP) threads the bilayer.

This sequence belongs to the PsbB/PsbC family. PsbC subfamily. In terms of assembly, PSII is composed of 1 copy each of membrane proteins PsbA, PsbB, PsbC, PsbD, PsbE, PsbF, PsbH, PsbI, PsbJ, PsbK, PsbL, PsbM, PsbT, PsbX, PsbY, PsbZ, Psb30/Ycf12, at least 3 peripheral proteins of the oxygen-evolving complex and a large number of cofactors. It forms dimeric complexes. Binds multiple chlorophylls and provides some of the ligands for the Ca-4Mn-5O cluster of the oxygen-evolving complex. It may also provide a ligand for a Cl- that is required for oxygen evolution. PSII binds additional chlorophylls, carotenoids and specific lipids. is required as a cofactor.

The protein localises to the plastid. The protein resides in the chloroplast thylakoid membrane. Its function is as follows. One of the components of the core complex of photosystem II (PSII). It binds chlorophyll and helps catalyze the primary light-induced photochemical processes of PSII. PSII is a light-driven water:plastoquinone oxidoreductase, using light energy to abstract electrons from H(2)O, generating O(2) and a proton gradient subsequently used for ATP formation. The protein is Photosystem II CP43 reaction center protein of Panax ginseng (Korean ginseng).